The following is an 81-amino-acid chain: RNA-binding protein KhpA (81 aa).

A KH domain is found at 34–81 (KIALRLSVHKSDTGKVIGKQGRTAKAIRTAVFAAGVQSSKKVQFEIFD).

It belongs to the KhpA RNA-binding protein family. Forms a complex with KhpB.

It localises to the cytoplasm. A probable RNA chaperone. Forms a complex with KhpB which binds to cellular RNA and controls its expression. Plays a role in peptidoglycan (PG) homeostasis and cell length regulation. The sequence is that of RNA-binding protein KhpA from Bacillus subtilis (strain 168).